The chain runs to 629 residues: tRNA uridine 5-carboxymethylaminomethyl modification enzyme MnmG (629 aa).

FAD contacts are provided by residues 14 to 19 (GAGHAG), Val126, and Ser181. 273–287 (GPRYCPSIEDKVVRF) provides a ligand contact to NAD(+). Position 370 (Gln370) interacts with FAD.

The protein belongs to the MnmG family. Homodimer. Heterotetramer of two MnmE and two MnmG subunits. The cofactor is FAD.

It is found in the cytoplasm. Functionally, NAD-binding protein involved in the addition of a carboxymethylaminomethyl (cmnm) group at the wobble position (U34) of certain tRNAs, forming tRNA-cmnm(5)s(2)U34. In Bacillus cereus (strain ATCC 10987 / NRS 248), this protein is tRNA uridine 5-carboxymethylaminomethyl modification enzyme MnmG.